The primary structure comprises 184 residues: Photosystem I assembly protein Ycf4 (184 aa).

2 helical membrane passes run 22-42 (VCWA…GTSS) and 57-77 (IIFF…LFIS).

The protein belongs to the Ycf4 family.

Its subcellular location is the plastid. It localises to the chloroplast thylakoid membrane. Functionally, seems to be required for the assembly of the photosystem I complex. The protein is Photosystem I assembly protein Ycf4 of Morus indica (Mulberry).